A 704-amino-acid chain; its full sequence is Ribosomal RNA large subunit methyltransferase K/L (704 aa).

The protein belongs to the methyltransferase superfamily. RlmKL family.

The protein resides in the cytoplasm. The enzyme catalyses guanosine(2445) in 23S rRNA + S-adenosyl-L-methionine = N(2)-methylguanosine(2445) in 23S rRNA + S-adenosyl-L-homocysteine + H(+). The catalysed reaction is guanosine(2069) in 23S rRNA + S-adenosyl-L-methionine = N(2)-methylguanosine(2069) in 23S rRNA + S-adenosyl-L-homocysteine + H(+). Its function is as follows. Specifically methylates the guanine in position 2445 (m2G2445) and the guanine in position 2069 (m7G2069) of 23S rRNA. The sequence is that of Ribosomal RNA large subunit methyltransferase K/L from Alcanivorax borkumensis (strain ATCC 700651 / DSM 11573 / NCIMB 13689 / SK2).